The primary structure comprises 143 residues: Crossover junction endodeoxyribonuclease Hjc (143 aa).

E11 is a Mg(2+) binding site. S31 is a catalytic residue. Mg(2+) is bound by residues D41 and E54.

Belongs to the Holliday junction resolvase Hjc family. Homodimer. It depends on Mg(2+) as a cofactor.

The enzyme catalyses Endonucleolytic cleavage at a junction such as a reciprocal single-stranded crossover between two homologous DNA duplexes (Holliday junction).. A structure-specific endonuclease that resolves Holliday junction (HJ) intermediates during genetic recombination. Cleaves 4-way DNA junctions introducing paired nicks in opposing strands, leaving a 5'-terminal phosphate and a 3'-terminal hydroxyl group that are ligated to produce recombinant products. Its function is as follows. Redundant function with Holliday junction resolvase Hje. This chain is Crossover junction endodeoxyribonuclease Hjc, found in Sulfolobus acidocaldarius (strain ATCC 33909 / DSM 639 / JCM 8929 / NBRC 15157 / NCIMB 11770).